Consider the following 766-residue polypeptide: Ubiquitin carboxyl-terminal hydrolase creB (766 aa).

The segment at 1-32 (MGSFLKSFRKDVGSAAPSVGAPPAKKEPQPLP) is disordered. Low complexity predominate over residues 13-23 (GSAAPSVGAPP). The USP domain occupies 55 to 466 (YGMENFGNTC…CAYVLFYQET (412 aa)). The active-site Nucleophile is Cys64. Disordered stretches follow at residues 115 to 145 (EALA…KDSP) and 243 to 266 (ESPQ…SRTP). The segment covering 249 to 263 (SDVSDSVIPSSSSGS) has biased composition (low complexity). Residue His417 is the Proton acceptor of the active site. The segment at 526 to 752 (APTAPQLSTH…HDRSSHGKWR (227 aa)) is disordered. The segment covering 548–572 (SPAPDPAPLTSLPPIPPIPETPPAP) has biased composition (pro residues). Positions 573 to 620 (LTSRKSDLQSKKERVKEEKERKAAEKEKEKQRRKEIETRLKDRQRRED) form a coiled coil. Composition is skewed to basic and acidic residues over residues 576–643 (RKSD…RNHA) and 734–747 (EQEH…DRSS).

Belongs to the peptidase C19 family. Interacts with creA, creC and qutD.

The catalysed reaction is Thiol-dependent hydrolysis of ester, thioester, amide, peptide and isopeptide bonds formed by the C-terminal Gly of ubiquitin (a 76-residue protein attached to proteins as an intracellular targeting signal).. Ubiquitin thioesterase component of the regulatory network controlling carbon source utilization through ubiquitination and deubiquitination involving creA, creB, creC, creD and acrB. Deubiquitinates the creA catabolic repressor and the quinate permease qutD. Also plays a role in response to carbon starvation and the control of extracellular proteases activity. This Emericella nidulans (strain FGSC A4 / ATCC 38163 / CBS 112.46 / NRRL 194 / M139) (Aspergillus nidulans) protein is Ubiquitin carboxyl-terminal hydrolase creB (creB).